A 202-amino-acid polypeptide reads, in one-letter code: Coiled-coil domain-containing protein mdt-28 (202 aa).

Acidic residues-rich tracts occupy residues 1–15 (MFEELDAEDGGEEQE) and 28–45 (EDIDDILGDAPDLPDDEY). Positions 1–83 (MFEELDAEDG…NEDDEEPIEP (83 aa)) are disordered. Residues 159-184 (IEEENLDEAIERQETIIAAAREMLNS) adopt a coiled-coil conformation.

As to quaternary structure, interacts with mdt-6 and mdt-30. Ubiquitously expressed in tissues including epidermal, intestinal, pharyngeal and uterine, and is also expressed in vulval muscle cells and gut granules.

It is found in the nucleus. Its subcellular location is the cytoplasm. Its function is as follows. Plays a role in normal growth and development. This is Coiled-coil domain-containing protein mdt-28 from Caenorhabditis elegans.